A 775-amino-acid chain; its full sequence is Polyribonucleotide nucleotidyltransferase (775 aa).

2 residues coordinate Mg(2+): Asp-487 and Asp-493. A KH domain is found at Pro-554–Ile-613. S1 motif domains follow at residues Gly-623–Glu-693 and Gly-707–Val-775.

Belongs to the polyribonucleotide nucleotidyltransferase family. Mg(2+) is required as a cofactor.

It localises to the cytoplasm. It catalyses the reaction RNA(n+1) + phosphate = RNA(n) + a ribonucleoside 5'-diphosphate. Functionally, involved in mRNA degradation. Catalyzes the phosphorolysis of single-stranded polyribonucleotides processively in the 3'- to 5'-direction. The polypeptide is Polyribonucleotide nucleotidyltransferase (Aquifex aeolicus (strain VF5)).